The sequence spans 97 residues: Large ribosomal subunit protein bL25 (97 aa).

Belongs to the bacterial ribosomal protein bL25 family. As to quaternary structure, part of the 50S ribosomal subunit; part of the 5S rRNA/L5/L18/L25 subcomplex. Contacts the 5S rRNA. Binds to the 5S rRNA independently of L5 and L18.

Functionally, this is one of the proteins that binds to the 5S RNA in the ribosome where it forms part of the central protuberance. The sequence is that of Large ribosomal subunit protein bL25 from Blochmanniella pennsylvanica (strain BPEN).